An 81-amino-acid polypeptide reads, in one-letter code: Photosystem I iron-sulfur center (81 aa).

2 4Fe-4S ferredoxin-type domains span residues 2–31 (SHSV…MIPW) and 39–68 (IAPA…VRVY). [4Fe-4S] cluster-binding residues include cysteine 11, cysteine 14, cysteine 17, cysteine 21, cysteine 48, cysteine 51, cysteine 54, and cysteine 58.

The eukaryotic PSI reaction center is composed of at least 11 subunits. [4Fe-4S] cluster serves as cofactor.

Its subcellular location is the plastid. The protein resides in the chloroplast thylakoid membrane. It catalyses the reaction reduced [plastocyanin] + hnu + oxidized [2Fe-2S]-[ferredoxin] = oxidized [plastocyanin] + reduced [2Fe-2S]-[ferredoxin]. Its function is as follows. Apoprotein for the two 4Fe-4S centers FA and FB of photosystem I (PSI); essential for photochemical activity. FB is the terminal electron acceptor of PSI, donating electrons to ferredoxin. The C-terminus interacts with PsaA/B/D and helps assemble the protein into the PSI complex. Required for binding of PsaD and PsaE to PSI. PSI is a plastocyanin-ferredoxin oxidoreductase, converting photonic excitation into a charge separation, which transfers an electron from the donor P700 chlorophyll pair to the spectroscopically characterized acceptors A0, A1, FX, FA and FB in turn. The polypeptide is Photosystem I iron-sulfur center (Chloranthus spicatus (Chulantree)).